The chain runs to 391 residues: L-tryptophan--pyruvate aminotransferase 1 (391 aa).

Pyridoxal 5'-phosphate contacts are provided by residues tyrosine 58, 100–101, asparagine 168, 191–194, 214–217, and arginine 225; these read ST, DFAY, and TFSK. Residue lysine 217 is modified to N6-(pyridoxal phosphate)lysine.

Belongs to the alliinase family. Pyridoxal 5'-phosphate is required as a cofactor. In terms of tissue distribution, expressed at the leaf margin and in the vasculature of emerging young leaves. Expressed in the quiescent center and in the vasculature of root tips. Detected in the shoot apical meristem, stems, sepals, stamen filaments, the shoot and root junction, the stigma and the base of the silique.

The protein localises to the cytoplasm. It catalyses the reaction L-tryptophan + 2-oxoglutarate = indole-3-pyruvate + L-glutamate. The catalysed reaction is L-tryptophan + pyruvate = indole-3-pyruvate + L-alanine. It functions in the pathway plant hormone metabolism; auxin biosynthesis. With respect to regulation, inhibited by L-kynurenine. In terms of biological role, L-tryptophan aminotransferase involved in auxin (IAA) biosynthesis. Can convert L-tryptophan and pyruvate to indole-3-pyruvic acid (IPA) and alanine. Catalyzes the first step in IPA branch of the auxin biosynthetic pathway. Required for auxin production to initiate multiple change in growth in response to environmental and developmental cues. It is also active with phenylalanine, tyrosine, leucine, alanine, methionine and glutamine. Both TAA1 and TAR2 are required for maintaining proper auxin levels in roots, while TAA1, TAR1 and TAR2 are required for proper embryo patterning. Involved in the maintenance of the root stem cell niches and required for shade avoidance. The polypeptide is L-tryptophan--pyruvate aminotransferase 1 (TAA1) (Arabidopsis thaliana (Mouse-ear cress)).